A 95-amino-acid polypeptide reads, in one-letter code: Co-chaperonin GroES (95 aa).

This sequence belongs to the GroES chaperonin family. Heptamer of 7 subunits arranged in a ring. Interacts with the chaperonin GroEL.

It localises to the cytoplasm. Together with the chaperonin GroEL, plays an essential role in assisting protein folding. The GroEL-GroES system forms a nano-cage that allows encapsulation of the non-native substrate proteins and provides a physical environment optimized to promote and accelerate protein folding. GroES binds to the apical surface of the GroEL ring, thereby capping the opening of the GroEL channel. In Cereibacter sphaeroides (strain ATCC 17025 / ATH 2.4.3) (Rhodobacter sphaeroides), this protein is Co-chaperonin GroES.